The sequence spans 314 residues: Mitotic checkpoint protein BUB3.3 (314 aa).

WD repeat units lie at residues 11 to 50, 52 to 90, 92 to 131, 134 to 173, 176 to 215, 229 to 269, and 272 to 311; these read PIEDAVSRLRFSPQSNNLLVASWDSYLRLYDVESSSLSLE, NSQAALLDCCFENESTSFTSGSDGFIRRYDLNAGTVDTI, RHDDISTSIVYSYEKGEVISTGFDEKIKFWDTRQRESLVF, DAGGAVGCVTVSGNNLVVCVDASMHIYDLRNLDEAFQSYA, VEVPIRCITSVPYSRGYAVGSVDGRVAVDFPNTSCSSEIK, LDGV…RLNE, and RYSNSIASLAFDHTGELLAIASSHTYQDAKEKEEAPQVFI.

This sequence belongs to the WD repeat BUB3 family. As to quaternary structure, part of the mitotic checkpoint complex (MCC).

It is found in the nucleus. Its subcellular location is the chromosome. The protein resides in the centromere. It localises to the kinetochore. The protein localises to the cytoplasm. It is found in the cytoskeleton. Its subcellular location is the phragmoplast. The protein resides in the spindle. Its function is as follows. Has a dual function in spindle-assembly checkpoint signaling and in promoting the establishment of correct kinetochore-microtubule (K-MT) attachments. Promotes the formation of stable end-on bipolar attachments. Necessary for kinetochore localization of BUB1. The BUB1/BUB3 complex plays a role in the inhibition of anaphase-promoting complex or cyclosome (APC/C) when spindle-assembly checkpoint is activated and inhibits the ubiquitin ligase activity of APC/C by phosphorylating its activator CDC20. This chain is Mitotic checkpoint protein BUB3.3 (BUB3.3), found in Arabidopsis thaliana (Mouse-ear cress).